Reading from the N-terminus, the 453-residue chain is Insulinoma-associated protein 1b (453 aa).

The tract at residues Met-1 to Ile-20 is SNAG domain. Residues Asn-140 to Pro-179 form a disordered region. The span at Pro-162–Val-171 shows a compositional bias: basic and acidic residues. A C2H2-type 1 zinc finger spans residues Tyr-252–His-274. The interval Ala-298 to Asp-318 is disordered. 3 C2H2-type zinc fingers span residues Tyr-321–His-343, Leu-383–His-406, and Phe-412–His-435.

This sequence belongs to the INSM1 family.

It localises to the nucleus. Functionally, may act as a transcriptional regulator. May play a role in neurogenesis and neuroendocrine cell differentiation during embryonic development. This is Insulinoma-associated protein 1b (insm1b) from Danio rerio (Zebrafish).